We begin with the raw amino-acid sequence, 200 residues long: MDADGLPIVGSGVDLTKVPAIQQRRIVAFLNQFIVHTVRFLNRFSTVCEEKLSTVSLRIQQIETTLSILEAKLASIPGLEEVTVDGVRAPAETNGPAADTSRATAPPAEASQQTQAAPQEPKTEAPAENIMTVAKDPRYARYLKMVQVGVPVMAIKNKMMMEGLDPNLLDTPDAAVPDASKKRLEEQDDDSSGSESSFSD.

Residues Ser56–Ile76 are a coiled coil. 2 disordered regions span residues Val87–Ile130 and Asp165–Asp200.

This sequence belongs to the CCDC53 family. As to quaternary structure, component of the WASH complex.

The sequence is that of WASH complex subunit 3 from Danio rerio (Zebrafish).